Consider the following 622-residue polypeptide: Chaperone protein HscA homolog (622 aa).

Belongs to the heat shock protein 70 family.

Functionally, chaperone involved in the maturation of iron-sulfur cluster-containing proteins. Has a low intrinsic ATPase activity which is markedly stimulated by HscB. This is Chaperone protein HscA homolog from Burkholderia thailandensis (strain ATCC 700388 / DSM 13276 / CCUG 48851 / CIP 106301 / E264).